Consider the following 317-residue polypeptide: tRNA dimethylallyltransferase (317 aa).

Residue 21–28 participates in ATP binding; sequence GPTASGKS. 23–28 contributes to the substrate binding site; that stretch reads TASGKS. Positions 46–49 are interaction with substrate tRNA; it reads DSMQ.

The protein belongs to the IPP transferase family. As to quaternary structure, monomer. It depends on Mg(2+) as a cofactor.

The catalysed reaction is adenosine(37) in tRNA + dimethylallyl diphosphate = N(6)-dimethylallyladenosine(37) in tRNA + diphosphate. Its function is as follows. Catalyzes the transfer of a dimethylallyl group onto the adenine at position 37 in tRNAs that read codons beginning with uridine, leading to the formation of N6-(dimethylallyl)adenosine (i(6)A). This chain is tRNA dimethylallyltransferase, found in Nitrobacter hamburgensis (strain DSM 10229 / NCIMB 13809 / X14).